A 316-amino-acid chain; its full sequence is Adenine deaminase (316 aa).

Zn(2+)-binding residues include His14, His16, and His194. The Proton donor role is filled by Glu197. Residue Asp275 coordinates Zn(2+). Asp276 contacts substrate.

This sequence belongs to the metallo-dependent hydrolases superfamily. Adenosine and AMP deaminases family. Adenine deaminase type 2 subfamily. Zn(2+) is required as a cofactor.

The catalysed reaction is adenine + H2O + H(+) = hypoxanthine + NH4(+). Functionally, catalyzes the hydrolytic deamination of adenine to hypoxanthine. Plays an important role in the purine salvage pathway and in nitrogen catabolism. The chain is Adenine deaminase from Bordetella avium (strain 197N).